Here is a 907-residue protein sequence, read N- to C-terminus: Catenin alpha-1 (907 aa).

The segment covering 870-879 has biased composition (basic and acidic residues); the sequence is VKREKLDDGQ. The tract at residues 870 to 895 is disordered; that stretch reads VKREKLDDGQTNKVKRSSQKKHINPV. Over residues 882 to 892 the composition is skewed to basic residues; the sequence is KVKRSSQKKHI.

Belongs to the vinculin/alpha-catenin family. In terms of assembly, interacts with ctnnb1, jupa and cdh2. Interacts with cdh1 during early stages of oogenesis, interaction is no longer present when oocyte develops into the unfertilized egg. As to expression, expressed in the skin (at protein level). Expressed in the ovary.

It localises to the cell junction. The protein localises to the adherens junction. The protein resides in the cytoplasm. It is found in the cytoskeleton. Its subcellular location is the cell membrane. It localises to the nucleus. In terms of biological role, associates with the cytoplasmic domain of a variety of cadherins, forming catenin and cadherin complexes which are further linked to the actin filament network and is thereby involved in cell-cell adhesion. Required for embryonic development, via maintenance of adherens junctions that facilitate the maintenance of the epithelial barrier. This Danio rerio (Zebrafish) protein is Catenin alpha-1.